Here is a 423-residue protein sequence, read N- to C-terminus: Serine--tRNA ligase (423 aa).

230 to 232 (TAE) is a binding site for L-serine. 261-263 (RSE) is an ATP binding site. E284 serves as a coordination point for L-serine. 348 to 351 (EISS) provides a ligand contact to ATP. S384 contributes to the L-serine binding site.

The protein belongs to the class-II aminoacyl-tRNA synthetase family. Type-1 seryl-tRNA synthetase subfamily. As to quaternary structure, homodimer. The tRNA molecule binds across the dimer.

It is found in the cytoplasm. It carries out the reaction tRNA(Ser) + L-serine + ATP = L-seryl-tRNA(Ser) + AMP + diphosphate + H(+). It catalyses the reaction tRNA(Sec) + L-serine + ATP = L-seryl-tRNA(Sec) + AMP + diphosphate + H(+). It functions in the pathway aminoacyl-tRNA biosynthesis; selenocysteinyl-tRNA(Sec) biosynthesis; L-seryl-tRNA(Sec) from L-serine and tRNA(Sec): step 1/1. Its function is as follows. Catalyzes the attachment of serine to tRNA(Ser). Is also able to aminoacylate tRNA(Sec) with serine, to form the misacylated tRNA L-seryl-tRNA(Sec), which will be further converted into selenocysteinyl-tRNA(Sec). In Syntrophobacter fumaroxidans (strain DSM 10017 / MPOB), this protein is Serine--tRNA ligase.